The primary structure comprises 397 residues: Aurora kinase A (397 aa).

The disordered stretch occupies residues 1-118; it reads MDRCKENCVS…SIQKTEDSKK (118 aa). Composition is skewed to polar residues over residues 29–55 and 84–102; these read QIPS…SQRV and RLSN…SGNN. 2 positions are modified to phosphoserine: Ser-40 and Ser-50. Basic and acidic residues predominate over residues 103-118; that stretch reads SEKEQTSIQKTEDSKK. The Protein kinase domain maps to 126 to 376; that stretch reads FDIGRPLGKG…LAEVLEHPWI (251 aa). Residues Lys-136, Lys-155, and 203–206 contribute to the ATP site; that span reads LEYA. The active-site Proton acceptor is Asp-249. Lys-251 participates in a covalent cross-link: Glycyl lysine isopeptide (Lys-Gly) (interchain with G-Cter in SUMO2). ATP contacts are provided by residues 253 to 254 and Asp-267; that span reads EN. Positions 273–286 are activation segment; that stretch reads HAPSSRRTTLCGTL. 2 positions are modified to phosphothreonine: Thr-280 and Thr-281. Ser-335 is subject to Phosphoserine; by PKA and PAK. The segment covering 378–387 has biased composition (polar residues); sequence ANSSKPPTGH. The interval 378–397 is disordered; the sequence is ANSSKPPTGHNSKEATSKSS. A compositionally biased stretch (basic and acidic residues) spans 388–397; it reads NSKEATSKSS.

Belongs to the protein kinase superfamily. Ser/Thr protein kinase family. Aurora subfamily. In terms of assembly, part of a complex composed of NEDD9, AURKA and CTTN; within the complex NEDD9 acts as a scaffold protein and is required for complex formation. Identified in a complex with AUNIP and NIN. Interacts with CPEB1, JTB, TACC1, TPX2, PPP2CA, as well as with the protein phosphatase type 1 (PP1) isoforms PPP1CA, PPP1CB and PPP1CC. Also interacts with its substrates ARHGEF2, BORA, KIF2A, PARD3, and p53/TP53. Interaction with BORA promotes phosphorylation of PLK1. Interacts with FBXL7 and CIMAP3. Interacts with GADD45A, competing with its oligomerization. Interacts (via C-terminus) with AUNIP (via C-terminus). Interacts with SIRT2. Interacts with FRY; this interaction facilitates AURKA-mediated PLK1 phosphorylation. Interacts with MYCN; interaction is phospho-independent and triggers AURKA activation; AURKA competes with FBXW7 for binding to unphosphorylated MYCN but not for binding to phosphorylated MYCN. Interacts with HNRNPU. Interacts with AAAS. Interacts with KLHL18 and CUL3. Interacts with FOXP1. Interacts with HDAC6; AURKA-mediated phosphorylation of HDAC6 promotes deacetylation of alpha-tubulin. Activated by phosphorylation at Thr-281; this brings about a change in the conformation of the activation segment. Phosphorylation at Thr-281 varies during the cell cycle and is highest during M phase. Autophosphorylated at Thr-281 upon TPX2 binding. Thr-281 can be phosphorylated by several kinases, including PAK and PKA. Protein phosphatase type 1 (PP1) binds AURKA and inhibits its activity by dephosphorylating Thr-281 during mitosis. Phosphorylation at Ser-335 decreases the kinase activity. PPP2CA controls degradation by dephosphorylating Ser-52 at the end of mitosis. Phosphorylated in embryonic brain neurons. In terms of processing, ubiquitinated by CHFR, leading to its degradation by the proteasome. Ubiquitinated by the anaphase-promoting complex (APC), leading to its degradation by the proteasome. Ubiquitinated by the E3 ubiquitin-protein ligase complex SCF(FBXL7) during mitosis, leading to its degradation by the proteasome. Ubiquitinated by the CUL3-KLHL18 ligase leading to its activation at the centrosome which is required for initiating mitotic entry. Ubiquitination mediated by CUL3-KLHL18 ligase does not lead to its degradation by the proteasome. Detected in neurons in brain cortex and hippocampus (at protein level). Expressed in mammary gland and tumor.

Its subcellular location is the cytoplasm. The protein resides in the cytoskeleton. The protein localises to the microtubule organizing center. It localises to the centrosome. It is found in the spindle pole. Its subcellular location is the centriole. The protein resides in the cell projection. The protein localises to the neuron projection. It localises to the cilium. It is found in the cilium basal body. Its subcellular location is the basolateral cell membrane. The enzyme catalyses L-seryl-[protein] + ATP = O-phospho-L-seryl-[protein] + ADP + H(+). It carries out the reaction L-threonyl-[protein] + ATP = O-phospho-L-threonyl-[protein] + ADP + H(+). Activation of CDK1, appears to be an upstream event of AURKA activation. Phosphatase inhibitor-2 (PPP1R2) and TPX2 act also as activators. Inactivated by the G2 checkpoint. Inhibited by GADD45A and p53/TP53, and through dephosphorylation by protein phosphatase type 1 (PP1). MLN8054 is also a potent and selective inhibitor. Activated during the early phase of cilia disassembly in the presence of FBXL7 and CIMAP3. Inhibited by the small molecule inhibitor VX-680. In terms of biological role, mitotic serine/threonine kinase that contributes to the regulation of cell cycle progression. Associates with the centrosome and the spindle microtubules during mitosis and plays a critical role in various mitotic events including the establishment of mitotic spindle, centrosome duplication, centrosome separation as well as maturation, chromosomal alignment, spindle assembly checkpoint, and cytokinesis. Required for normal spindle positioning during mitosis and for the localization of NUMA1 and DCTN1 to the cell cortex during metaphase. Required for initial activation of CDK1 at centrosomes. Phosphorylates numerous target proteins, including ARHGEF2, BORA, BRCA1, CDC25B, DLGP5, HDAC6, KIF2A, LATS2, NDEL1, PARD3, PPP1R2, PLK1, RASSF1, TACC3, p53/TP53 and TPX2. Phosphorylates MCRS1 which is required for MCRS1-mediated kinetochore fiber assembly and mitotic progression. Regulates KIF2A tubulin depolymerase activity. Required for normal axon formation. Plays a role in microtubule remodeling during neurite extension. Important for microtubule formation and/or stabilization. Also acts as a key regulatory component of the p53/TP53 pathway, and particularly the checkpoint-response pathways critical for oncogenic transformation of cells, by phosphorylating and stabilizating p53/TP53. Phosphorylates its own inhibitors, the protein phosphatase type 1 (PP1) isoforms, to inhibit their activity. Inhibits cilia outgrowth. Required for cilia disassembly via phosphorylation of HDAC6 and subsequent deacetylation of alpha-tubulin. Regulates protein levels of the anti-apoptosis protein BIRC5 by suppressing the expression of the SCF(FBXL7) E3 ubiquitin-protein ligase substrate adapter FBXL7 through the phosphorylation of the transcription factor FOXP1. This Rattus norvegicus (Rat) protein is Aurora kinase A.